The sequence spans 90 residues: Acylphosphatase (90 aa).

The Acylphosphatase-like domain maps to 3–89 (ALKIRVEGIV…EGYEDFTIKY (87 aa)). Residues R18 and N36 contribute to the active site.

It belongs to the acylphosphatase family.

It catalyses the reaction an acyl phosphate + H2O = a carboxylate + phosphate + H(+). The chain is Acylphosphatase (acyP) from Thermotoga maritima (strain ATCC 43589 / DSM 3109 / JCM 10099 / NBRC 100826 / MSB8).